We begin with the raw amino-acid sequence, 430 residues long: Mucorpepsin (430 aa).

An N-terminal signal peptide occupies residues 1–22 (MLFSQITSAILLTAASLSLTTA). Residues 23–69 (RPVSKQSESKDKLLALPLTSVSRKFSQTKFGQQQLAEKLAGLKPFSE) constitute a propeptide, activation peptide. Residues 89-421 (YAIPVSIGTP…DFGNNRIGFA (333 aa)) form the Peptidase A1 domain. Asp-107 is an active-site residue. Residues Cys-120 and Cys-126 are joined by a disulfide bond. N-linked (GlcNAc...) asparagine glycosylation is found at Asn-148 and Asn-257. Residue Asp-306 is part of the active site. Cys-341 and Cys-385 form a disulfide bridge.

Belongs to the peptidase A1 family.

It catalyses the reaction Hydrolysis of proteins, favoring hydrophobic residues at P1 and P1'. Clots milk. Does not accept Lys at P1, and hence does not activate trypsinogen.. This enzyme, capable of clotting milk is frequently used for cheese production. The sequence is that of Mucorpepsin from Rhizomucor miehei.